Consider the following 64-residue polypeptide: Beta-defensin 1 (64 aa).

Residues 1-20 (MRLHRLLLVFLLMVLLPVPG) form the signal peptide. A propeptide spanning residues 21 to 23 (LLK) is cleaved from the precursor. Intrachain disulfides connect Cys31/Cys60, Cys38/Cys53, and Cys43/Cys61.

It belongs to the beta-defensin family. In terms of assembly, monomer. Homodimer.

The protein localises to the secreted. The protein resides in the membrane. Its function is as follows. Has bactericidal activity. May act as a ligand for C-C chemokine receptor CCR6. Positively regulates the sperm motility and bactericidal activity in a CCR6-dependent manner. Binds to CCR6 and triggers Ca2+ mobilization in the sperm which is important for its motility. The sequence is that of Beta-defensin 1 (DEFB1) from Sus scrofa (Pig).